Here is a 915-residue protein sequence, read N- to C-terminus: Protein O-mannosyl-transferase TMTC3 (915 aa).

At 1 to 8 (MANINLKE) the chain is on the cytoplasmic side. The chain crosses the membrane as a helical span at residues 9–29 (ITLIVGVVTACYWNSLFCGFV). Residues 30 to 93 (FDDVSAILDN…LSELKPMSYH (64 aa)) are Extracellular-facing. A helical transmembrane segment spans residues 94–114 (LLNMIFHAVVSVIFLKVCKLF). Residues 115-120 (LDNKSS) are Cytoplasmic-facing. A run of 2 helical transmembrane segments spans residues 121 to 139 (VIAS…AVTG) and 140 to 158 (VVGR…AFLS). The Cytoplasmic segment spans residues 159–166 (YTRSKGPD). Residues 167–187 (NSIIWTPIALTVFLVAVATLC) traverse the membrane as a helical segment. The Extracellular portion of the chain corresponds to 188–193 (KEQGIT). Residues 194-214 (VVGICCVYEVFIAQGYTLPLL) form a helical membrane-spanning segment. At 215–231 (CTTAGQFLRGKGSIPFS) the chain is on the cytoplasmic side. Residues 232–252 (MLQTLVKLIVLMFSTLLLVVI) traverse the membrane as a helical segment. Topologically, residues 253 to 317 (RVQVIQSQLP…TIPLIESLLD (65 aa)) are extracellular. A helical membrane pass occupies residues 318–338 (IRNLATFTFFCFLGMLGVFSI). At 339–353 (RYSGDSSKTVLMALC) the chain is on the cytoplasmic side. A helical membrane pass occupies residues 354–374 (LMALPFIPASNLFFPVGFVVA). Residues 375 to 376 (ER) are Extracellular-facing. A helical transmembrane segment spans residues 377-397 (VLYVPSMGFCILVAHGWQKIS). The Cytoplasmic segment spans residues 398–404 (TKSVFKK). A helical transmembrane segment spans residues 405–423 (LSWICLSMVILTHSLKTFH). Residues 424–915 (RNWDWESEYT…EEIERILNGE (492 aa)) are Extracellular-facing. TPR repeat units follow at residues 446–479 (AKLW…QPDD), 480–513 (IGAH…MPQI), 529–562 (NVYI…RPDF), 563–596 (KQAY…DRNN), 597–631 (ADLW…NPKH), 669–702 (ANGY…QADF), 703–736 (RSAL…YPDH), 738–771 (KGLI…DPSN), and 772–805 (VQGK…APHE). The N-linked (GlcNAc...) asparagine glycan is linked to N494. Residue Y503 is modified to Phosphotyrosine. N541 carries N-linked (GlcNAc...) asparagine glycosylation. The tract at residues 848-892 (KEIRGESRQTQIVKTSDNKSQSKSNKQLGKNGDEETPHKTTKDIK) is disordered. A glycan (N-linked (GlcNAc...) asparagine) is linked at N865. A compositionally biased stretch (low complexity) spans 865-874 (NKSQSKSNKQ). The segment covering 878–892 (NGDEETPHKTTKDIK) has biased composition (basic and acidic residues).

This sequence belongs to the TMTC family.

The protein resides in the membrane. It localises to the endoplasmic reticulum. It catalyses the reaction a di-trans,poly-cis-dolichyl beta-D-mannosyl phosphate + L-seryl-[protein] = 3-O-(alpha-D-mannosyl)-L-seryl-[protein] + a di-trans,poly-cis-dolichyl phosphate + H(+). The catalysed reaction is a di-trans,poly-cis-dolichyl beta-D-mannosyl phosphate + L-threonyl-[protein] = 3-O-(alpha-D-mannosyl)-L-threonyl-[protein] + a di-trans,poly-cis-dolichyl phosphate + H(+). It functions in the pathway protein modification; protein glycosylation. Functionally, transfers mannosyl residues to the hydroxyl group of serine or threonine residues. The 4 members of the TMTC family are O-mannosyl-transferases dedicated primarily to the cadherin superfamily, each member seems to have a distinct role in decorating the cadherin domains with O-linked mannose glycans at specific regions. Also acts as O-mannosyl-transferase on other proteins such as PDIA3. Involved in the positive regulation of proteasomal protein degradation in the endoplasmic reticulum (ER), and the control of ER stress response. The protein is Protein O-mannosyl-transferase TMTC3 of Homo sapiens (Human).